A 429-amino-acid polypeptide reads, in one-letter code: Histidine--tRNA ligase (429 aa).

The protein belongs to the class-II aminoacyl-tRNA synthetase family. As to quaternary structure, homodimer.

It localises to the cytoplasm. The enzyme catalyses tRNA(His) + L-histidine + ATP = L-histidyl-tRNA(His) + AMP + diphosphate + H(+). This Streptococcus pneumoniae serotype 4 (strain ATCC BAA-334 / TIGR4) protein is Histidine--tRNA ligase.